The sequence spans 207 residues: Chaperone protein TorD (207 aa).

Belongs to the TorD/DmsD family. TorD subfamily.

The protein resides in the cytoplasm. In terms of biological role, involved in the biogenesis of TorA. Acts on TorA before the insertion of the molybdenum cofactor and, as a result, probably favors a conformation of the apoenzyme that is competent for acquiring the cofactor. The chain is Chaperone protein TorD from Aggregatibacter aphrophilus (strain NJ8700) (Haemophilus aphrophilus).